The chain runs to 619 residues: Glucokinase regulatory protein (619 aa).

SIS domains follow at residues 90 to 283 and 319 to 498; these read VQEV…AESN and TATS…LRGK. Keto-D-fructose 6-phosphate is bound at residue 107–109; sequence CGT. Residues 109–110, glutamate 153, 179–181, and glutamate 347 contribute to the beta-D-fructose 1-phosphate site; these read TS and SCG. Residues 179 to 183 and glutamate 347 each bind keto-D-fructose 6-phosphate; that span reads SCGLS. Residues 462 to 464 are essential for interaction with GCK; sequence ILF. Keto-D-fructose 6-phosphate is bound at residue lysine 513. Position 513 (lysine 513) interacts with beta-D-fructose 1-phosphate.

The protein belongs to the GCKR family. As to quaternary structure, interacts (fructose 6-phosphate bound form) with gck.

Its subcellular location is the nucleus. It is found in the cytoplasm. It localises to the mitochondrion. Functionally, regulates glucokinase (gck) by forming an inactive complex with this enzyme. The affinity of gckr for gck is modulated by fructose metabolites: gckr with bound fructose 6-phosphate has increased affinity for gck, while gckr with bound fructose 1-phosphate has strongly decreased affinity for gck and does not inhibit gck activity. The polypeptide is Glucokinase regulatory protein (Xenopus laevis (African clawed frog)).